Consider the following 336-residue polypeptide: Glyoxylate reductase (336 aa).

NADP(+)-binding positions include 158–161 (FGRI), 180–182 (SRT), and 239–241 (IAR). Active-site residues include Arg241 and Glu270. His288 acts as the Proton donor in catalysis. Residue 288–290 (HIG) coordinates NADP(+).

The protein belongs to the D-isomer specific 2-hydroxyacid dehydrogenase family. GyaR subfamily. Homodimer.

It is found in the cytoplasm. The enzyme catalyses glycolate + NAD(+) = glyoxylate + NADH + H(+). This Pyrococcus furiosus (strain ATCC 43587 / DSM 3638 / JCM 8422 / Vc1) protein is Glyoxylate reductase.